Reading from the N-terminus, the 1431-residue chain is Collagen alpha-1(XVII) chain (1431 aa).

Residues 1–468 lie on the Cytoplasmic side of the membrane; sequence MDVTKKNKRD…AWCPCGSCCS (468 aa). The nonhelical region (NC16) stretch occupies residues 1–569; sequence MDVTKKNKRD…MTEQENGNLR (569 aa). Disordered stretches follow at residues 25-155, 167-188, 304-324, and 422-449; these read TRLT…PSTR, KGSR…PIPK, TAYG…TGVS, and SVEN…GGGG. Over residues 60–74 the composition is skewed to low complexity; sequence GSSGYINSSGSIRGN. 3 stretches are compositionally biased toward polar residues: residues 75–96, 111–120, and 170–184; these read ASTS…SPGS, EGSSSGNSSP, and RSAS…SSTL. A necessary for interaction with DST and for the recruitment of DST to hemidesmosome region spans residues 146 to 231; the sequence is RLQSASPSTR…WSSTLPAGSS (86 aa). Gly residues predominate over residues 430–449; that stretch reads RGGGSGGGARGGGGSGGGGG. A helical; Signal-anchor for type II membrane protein transmembrane segment spans residues 469 to 489; it reads WWKWLLGLLLTWLLLLGLLFG. At 490-1431 the chain is on the extracellular side; sequence LIALAEEVRK…RRRRSIAIKP (942 aa). At S547 the chain carries Phosphoserine; by CK2. Disordered regions lie at residues 564-869, 884-996, 1158-1178, and 1208-1249; these read ENGN…SFIS, DLRG…SSSG, DIIG…PGVS, and FIIG…SSSV. The segment at 570 to 1417 is triple-helical region; it reads GNPGPKGDMG…KGDKGDKGDQ (848 aa). 3 stretches are compositionally biased toward low complexity: residues 657 to 673, 738 to 751, and 778 to 799; these read PRGL…RGPN, EPGA…AGPD, and PGKP…PGRP. Pro residues-rich tracts occupy residues 823 to 844, 889 to 911, 937 to 946, 979 to 989, 1162 to 1174, and 1212 to 1221; these read PGPP…PGPA, LGPP…PRGP, PPGPPGPPGP, PPGPPGPPGPP, PPGP…PRGP, and PPGPPGPQGP. N-linked (GlcNAc...) asparagine glycosylation occurs at N1230. The segment covering 1232 to 1249 has biased composition (polar residues); sequence SWGSSSSARRGTAYSSSV. N-linked (GlcNAc...) asparagine glycosylation occurs at N1356. A disordered region spans residues 1366–1431; that stretch reads RTHGAIPGPP…RRRRSIAIKP (66 aa). The segment covering 1407–1416 has biased composition (basic and acidic residues); sequence QKGDKGDKGD. A nonhelical region (NC1) region spans residues 1418–1431; it reads VYTGRRRRSIAIKP. Over residues 1421-1431 the composition is skewed to basic residues; sequence GRRRRSIAIKP.

As to quaternary structure, homotrimers of alpha 1(XVII)chains. Interacts (via cytoplasmic region) with ITGB4 (via cytoplasmic region). Interacts (via cytoplasmic region) with DST (via N-terminus). Interacts (via N-terminus) with PLEC. Interacts (via cytoplasmic region) with DSP. In terms of processing, the intracellular/endo domain is disulfide-linked. Post-translationally, prolines at the third position of the tripeptide repeating unit (G-X-Y) are hydroxylated in some or all of the chains. The ectodomain is shedded from the surface of keratinocytes resulting in a 120-kDa soluble form, also named as 120 kDa linear IgA disease antigen homolog. The shedding is mediated by membrane-bound metalloproteases. This cleavage is inhibited by phosphorylation at Ser-547.

The protein resides in the cell junction. It is found in the hemidesmosome. Its subcellular location is the membrane. It localises to the secreted. The protein localises to the extracellular space. The protein resides in the extracellular matrix. It is found in the basement membrane. May play a role in the integrity of hemidesmosome and the attachment of basal keratinocytes to the underlying basement membrane. In terms of biological role, the 120 kDa linear IgA disease antigen homolog is an anchoring filament component involved in dermal-epidermal cohesion. The polypeptide is Collagen alpha-1(XVII) chain (COL17A1) (Mesocricetus auratus (Golden hamster)).